The chain runs to 154 residues: MTQDNKLQVEAIRRGTVIDHIPAQVGMKLLSLFKLTATDERITIGLNLPSNQQGKKDLIKLENIFLTEEQANQLAIYAPHATVNRIDNYDVVRKQTLSLPERIDGVLTCPNSNCISRSEPVASGFRVQVHGQQVHLQCKYCEKEFEHQAVVQSA.

Zn(2+)-binding residues include Cys-109, Cys-114, Cys-138, and Cys-141.

It belongs to the PyrI family. In terms of assembly, contains catalytic and regulatory chains. It depends on Zn(2+) as a cofactor.

Functionally, involved in allosteric regulation of aspartate carbamoyltransferase. This is Aspartate carbamoyltransferase regulatory chain from Sodalis glossinidius (strain morsitans).